Reading from the N-terminus, the 640-residue chain is 1,4-alpha-glucan branching enzyme GlgB (640 aa).

Aspartate 318 serves as the catalytic Nucleophile. Glutamate 371 functions as the Proton donor in the catalytic mechanism.

This sequence belongs to the glycosyl hydrolase 13 family. GlgB subfamily. As to quaternary structure, monomer.

It catalyses the reaction Transfers a segment of a (1-&gt;4)-alpha-D-glucan chain to a primary hydroxy group in a similar glucan chain.. The protein operates within glycan biosynthesis; glycogen biosynthesis. Catalyzes the formation of the alpha-1,6-glucosidic linkages in glycogen by scission of a 1,4-alpha-linked oligosaccharide from growing alpha-1,4-glucan chains and the subsequent attachment of the oligosaccharide to the alpha-1,6 position. The sequence is that of 1,4-alpha-glucan branching enzyme GlgB from Francisella tularensis subsp. mediasiatica (strain FSC147).